Consider the following 424-residue polypeptide: Serine--tRNA ligase (424 aa).

T231–E233 lines the L-serine pocket. R262–E264 contributes to the ATP binding site. E285 lines the L-serine pocket. E349 to S352 is an ATP binding site. S385 is a binding site for L-serine.

It belongs to the class-II aminoacyl-tRNA synthetase family. Type-1 seryl-tRNA synthetase subfamily. In terms of assembly, homodimer. The tRNA molecule binds across the dimer.

It localises to the cytoplasm. The enzyme catalyses tRNA(Ser) + L-serine + ATP = L-seryl-tRNA(Ser) + AMP + diphosphate + H(+). It carries out the reaction tRNA(Sec) + L-serine + ATP = L-seryl-tRNA(Sec) + AMP + diphosphate + H(+). It functions in the pathway aminoacyl-tRNA biosynthesis; selenocysteinyl-tRNA(Sec) biosynthesis; L-seryl-tRNA(Sec) from L-serine and tRNA(Sec): step 1/1. Catalyzes the attachment of serine to tRNA(Ser). Is also able to aminoacylate tRNA(Sec) with serine, to form the misacylated tRNA L-seryl-tRNA(Sec), which will be further converted into selenocysteinyl-tRNA(Sec). This chain is Serine--tRNA ligase, found in Geobacillus sp. (strain WCH70).